Consider the following 813-residue polypeptide: Xaa-Pro dipeptidyl-peptidase (813 aa).

Active-site charge relay system residues include Ser-375, Asp-495, and His-526.

Belongs to the peptidase S15 family. As to quaternary structure, homodimer.

Its subcellular location is the cytoplasm. It carries out the reaction Hydrolyzes Xaa-Pro-|- bonds to release unblocked, N-terminal dipeptides from substrates including Ala-Pro-|-p-nitroanilide and (sequentially) Tyr-Pro-|-Phe-Pro-|-Gly-Pro-|-Ile.. Removes N-terminal dipeptides sequentially from polypeptides having unsubstituted N-termini provided that the penultimate residue is proline. This Lactiplantibacillus plantarum (strain ATCC BAA-793 / NCIMB 8826 / WCFS1) (Lactobacillus plantarum) protein is Xaa-Pro dipeptidyl-peptidase.